A 203-amino-acid chain; its full sequence is MAKESTTIDVGEPSTVTKSSSHVVKKKGFVAAAAGGGAKRGLAIFDFLLRLAAIGVTIGAASVMYTAQETLPFFTQFLQFQAGYDDLPAFQYFVIAVAIVASYLVLSLPFSIVTIVRPLAVAPRLILLIFDTLVVTLNTSAAAAAASIVYLAHNGNQSTNWLPICQQFGDFCQNVSTAVVAASIAILFFIVLIIISAIALKRH.

Ala2 carries the N-acetylalanine modification. The Cytoplasmic segment spans residues 2 to 40 (AKESTTIDVGEPSTVTKSSSHVVKKKGFVAAAAGGGAKR). The chain crosses the membrane as a helical span at residues 41 to 61 (GLAIFDFLLRLAAIGVTIGAA). Residues 62 to 92 (SVMYTAQETLPFFTQFLQFQAGYDDLPAFQY) are Extracellular-facing. Residues 93–113 (FVIAVAIVASYLVLSLPFSIV) traverse the membrane as a helical segment. Residues 114 to 124 (TIVRPLAVAPR) lie on the Cytoplasmic side of the membrane. A helical membrane pass occupies residues 125–145 (LILLIFDTLVVTLNTSAAAAA). The Extracellular portion of the chain corresponds to 146-177 (ASIVYLAHNGNQSTNWLPICQQFGDFCQNVST). N-linked (GlcNAc...) asparagine glycans are attached at residues Asn156 and Asn174. A helical transmembrane segment spans residues 178–198 (AVVAASIAILFFIVLIIISAI). Residues 199-203 (ALKRH) are Cytoplasmic-facing.

This sequence belongs to the Casparian strip membrane proteins (CASP) family. As to quaternary structure, homodimer and heterodimers.

The protein resides in the cell membrane. Functionally, regulates membrane-cell wall junctions and localized cell wall deposition. Required for establishment of the Casparian strip membrane domain (CSD) and the subsequent formation of Casparian strips, a cell wall modification of the root endodermis that determines an apoplastic barrier between the intraorganismal apoplasm and the extraorganismal apoplasm and prevents lateral diffusion. This chain is Casparian strip membrane protein 1, found in Arabidopsis lyrata subsp. lyrata (Lyre-leaved rock-cress).